The sequence spans 264 residues: S-adenosylmethionine decarboxylase proenzyme (264 aa).

Ser-113 (schiff-base intermediate with substrate; via pyruvic acid) is an active-site residue. The residue at position 113 (Ser-113) is a Pyruvic acid (Ser); by autocatalysis. His-118 functions as the Proton acceptor; for processing activity in the catalytic mechanism. Residue Cys-141 is the Proton donor; for catalytic activity of the active site.

It belongs to the prokaryotic AdoMetDC family. Type 2 subfamily. As to quaternary structure, heterooctamer of four alpha and four beta chains arranged as a tetramer of alpha/beta heterodimers. Pyruvate serves as cofactor. In terms of processing, is synthesized initially as an inactive proenzyme. Formation of the active enzyme involves a self-maturation process in which the active site pyruvoyl group is generated from an internal serine residue via an autocatalytic post-translational modification. Two non-identical subunits are generated from the proenzyme in this reaction, and the pyruvate is formed at the N-terminus of the alpha chain, which is derived from the carboxyl end of the proenzyme. The post-translation cleavage follows an unusual pathway, termed non-hydrolytic serinolysis, in which the side chain hydroxyl group of the serine supplies its oxygen atom to form the C-terminus of the beta chain, while the remainder of the serine residue undergoes an oxidative deamination to produce ammonia and the pyruvoyl group blocking the N-terminus of the alpha chain.

The catalysed reaction is S-adenosyl-L-methionine + H(+) = S-adenosyl 3-(methylsulfanyl)propylamine + CO2. Its pathway is amine and polyamine biosynthesis; S-adenosylmethioninamine biosynthesis; S-adenosylmethioninamine from S-adenosyl-L-methionine: step 1/1. Its function is as follows. Catalyzes the decarboxylation of S-adenosylmethionine to S-adenosylmethioninamine (dcAdoMet), the propylamine donor required for the synthesis of the polyamines spermine and spermidine from the diamine putrescine. This is S-adenosylmethionine decarboxylase proenzyme from Azotobacter vinelandii (strain DJ / ATCC BAA-1303).